We begin with the raw amino-acid sequence, 469 residues long: Argininosuccinate lyase (469 aa).

This sequence belongs to the lyase 1 family. Argininosuccinate lyase subfamily.

Its subcellular location is the cytoplasm. It carries out the reaction 2-(N(omega)-L-arginino)succinate = fumarate + L-arginine. It participates in amino-acid biosynthesis; L-arginine biosynthesis; L-arginine from L-ornithine and carbamoyl phosphate: step 3/3. The chain is Argininosuccinate lyase from Burkholderia orbicola (strain MC0-3).